Here is a 1241-residue protein sequence, read N- to C-terminus: ATP-dependent helicase/nuclease subunit A (1241 aa).

In terms of domain architecture, UvrD-like helicase ATP-binding spans 12–485; that stretch reads SQWTDDQWKA…IDLAKNFRSR (474 aa). Residue 33–40 participates in ATP binding; sequence AAAGSGKT. The region spanning 505-805 is the UvrD-like helicase C-terminal domain; the sequence is GEIDYDADAE…RIMTIHKSKG (301 aa).

It belongs to the helicase family. AddA subfamily. As to quaternary structure, heterodimer of AddA and AddB/RexB. Requires Mg(2+) as cofactor.

The enzyme catalyses Couples ATP hydrolysis with the unwinding of duplex DNA by translocating in the 3'-5' direction.. The catalysed reaction is ATP + H2O = ADP + phosphate + H(+). Functionally, the heterodimer acts as both an ATP-dependent DNA helicase and an ATP-dependent, dual-direction single-stranded exonuclease. Recognizes the chi site generating a DNA molecule suitable for the initiation of homologous recombination. The AddA nuclease domain is required for chi fragment generation; this subunit has the helicase and 3' -&gt; 5' nuclease activities. In Bacillus mycoides (strain KBAB4) (Bacillus weihenstephanensis), this protein is ATP-dependent helicase/nuclease subunit A.